Here is a 398-residue protein sequence, read N- to C-terminus: Elongation factor Tu (398 aa).

Residues 10 to 207 (KPHVNIGTIG…TVDEYIPEPE (198 aa)) form the tr-type G domain. The interval 19–26 (GHVDHGKT) is G1. A GTP-binding site is contributed by 19–26 (GHVDHGKT). Residue threonine 26 coordinates Mg(2+). The tract at residues 63 to 67 (GITIN) is G2. Residues 84–87 (DAPG) are G3. GTP is bound by residues 84 to 88 (DAPGH) and 139 to 142 (NKVD). Residues 139–142 (NKVD) are G4. The G5 stretch occupies residues 177–179 (SAL).

The protein belongs to the TRAFAC class translation factor GTPase superfamily. Classic translation factor GTPase family. EF-Tu/EF-1A subfamily. As to quaternary structure, monomer.

It is found in the cytoplasm. It carries out the reaction GTP + H2O = GDP + phosphate + H(+). GTP hydrolase that promotes the GTP-dependent binding of aminoacyl-tRNA to the A-site of ribosomes during protein biosynthesis. This chain is Elongation factor Tu, found in Streptococcus thermophilus (strain CNRZ 1066).